A 389-amino-acid polypeptide reads, in one-letter code: MSELNVTPSSVSPEIVIPKKEKINLLDLNRQQMREFFAGLGEKPFRADQVMKWIYHYCCDDFDEMTDINKVFRNRLKELAEIRAPEVAEEQRSSDGTIKWAIQVGGQQVETVYIPEKDRATLCVSSQVGCALECKFCSTAQQGFNRNLRVSEIIGQVWRAAKIIGATKVIGQRPITNVVMMGMGEPLLNLTNVVPAMEIMLDDFGFGLSKRRVTLSTSGVVPALDKLGDMIDVALAISLHAPNDTIRDEIVPINKKYNIETFLASVSRYIGKSNANQGRVTIEYVMLDHINDSTDNAHELAALLKETPCKINLIPWNPFPGAPYGRSSNSRIDRFSKVLMEYGFTTIVRKTRGDDIDAACGQLAGDVIDRTKRTLKKKMAGEAISVKAL.

The active-site Proton acceptor is the Glu110. Residues 116 to 355 (EKDRATLCVS…TIVRKTRGDD (240 aa)) enclose the Radical SAM core domain. The cysteines at positions 123 and 360 are disulfide-linked. [4Fe-4S] cluster contacts are provided by Cys130, Cys134, and Cys137. S-adenosyl-L-methionine-binding positions include 184 to 185 (GE), Ser216, 238 to 240 (SLH), and Asn317. Cys360 acts as the S-methylcysteine intermediate in catalysis.

The protein belongs to the radical SAM superfamily. RlmN family. [4Fe-4S] cluster serves as cofactor.

The protein localises to the cytoplasm. It catalyses the reaction adenosine(2503) in 23S rRNA + 2 reduced [2Fe-2S]-[ferredoxin] + 2 S-adenosyl-L-methionine = 2-methyladenosine(2503) in 23S rRNA + 5'-deoxyadenosine + L-methionine + 2 oxidized [2Fe-2S]-[ferredoxin] + S-adenosyl-L-homocysteine. The enzyme catalyses adenosine(37) in tRNA + 2 reduced [2Fe-2S]-[ferredoxin] + 2 S-adenosyl-L-methionine = 2-methyladenosine(37) in tRNA + 5'-deoxyadenosine + L-methionine + 2 oxidized [2Fe-2S]-[ferredoxin] + S-adenosyl-L-homocysteine. Specifically methylates position 2 of adenine 2503 in 23S rRNA and position 2 of adenine 37 in tRNAs. m2A2503 modification seems to play a crucial role in the proofreading step occurring at the peptidyl transferase center and thus would serve to optimize ribosomal fidelity. The protein is Dual-specificity RNA methyltransferase RlmN of Erwinia tasmaniensis (strain DSM 17950 / CFBP 7177 / CIP 109463 / NCPPB 4357 / Et1/99).